The chain runs to 285 residues: Polyamine aminopropyltransferase (285 aa).

Residues 5–241 (DTWFTEHFQT…GWWSVTLSSK (237 aa)) form the PABS domain. Gln35 contributes to the S-methyl-5'-thioadenosine binding site. Spermidine-binding residues include His66 and Asp90. S-methyl-5'-thioadenosine contacts are provided by residues Asp110 and 141 to 142 (DG). The active-site Proton acceptor is Asp160. 160 to 163 (DSTD) is a binding site for spermidine. Pro167 contacts S-methyl-5'-thioadenosine.

The protein belongs to the spermidine/spermine synthase family. Homodimer or homotetramer.

Its subcellular location is the cytoplasm. The catalysed reaction is S-adenosyl 3-(methylsulfanyl)propylamine + putrescine = S-methyl-5'-thioadenosine + spermidine + H(+). The protein operates within amine and polyamine biosynthesis; spermidine biosynthesis; spermidine from putrescine: step 1/1. Its function is as follows. Catalyzes the irreversible transfer of a propylamine group from the amino donor S-adenosylmethioninamine (decarboxy-AdoMet) to putrescine (1,4-diaminobutane) to yield spermidine. This is Polyamine aminopropyltransferase from Xylella fastidiosa (strain Temecula1 / ATCC 700964).